Consider the following 492-residue polypeptide: Probable cytosol aminopeptidase (492 aa).

Mn(2+) contacts are provided by lysine 248 and aspartate 253. Lysine 260 is a catalytic residue. Mn(2+) contacts are provided by aspartate 271, aspartate 330, and glutamate 332. Residue arginine 334 is part of the active site.

This sequence belongs to the peptidase M17 family. Mn(2+) serves as cofactor.

It localises to the cytoplasm. It carries out the reaction Release of an N-terminal amino acid, Xaa-|-Yaa-, in which Xaa is preferably Leu, but may be other amino acids including Pro although not Arg or Lys, and Yaa may be Pro. Amino acid amides and methyl esters are also readily hydrolyzed, but rates on arylamides are exceedingly low.. It catalyses the reaction Release of an N-terminal amino acid, preferentially leucine, but not glutamic or aspartic acids.. Functionally, presumably involved in the processing and regular turnover of intracellular proteins. Catalyzes the removal of unsubstituted N-terminal amino acids from various peptides. This is Probable cytosol aminopeptidase (pepA) from Aeropyrum pernix (strain ATCC 700893 / DSM 11879 / JCM 9820 / NBRC 100138 / K1).